Here is a 102-residue protein sequence, read N- to C-terminus: Small ribosomal subunit protein uS10 (102 aa).

It belongs to the universal ribosomal protein uS10 family. Part of the 30S ribosomal subunit.

Its function is as follows. Involved in the binding of tRNA to the ribosomes. The protein is Small ribosomal subunit protein uS10 of Methylobacterium nodulans (strain LMG 21967 / CNCM I-2342 / ORS 2060).